The chain runs to 144 residues: Large ribosomal subunit protein uL11 (144 aa).

This sequence belongs to the universal ribosomal protein uL11 family. As to quaternary structure, part of the ribosomal stalk of the 50S ribosomal subunit. Interacts with L10 and the large rRNA to form the base of the stalk. L10 forms an elongated spine to which L12 dimers bind in a sequential fashion forming a multimeric L10(L12)X complex. Post-translationally, one or more lysine residues are methylated.

Forms part of the ribosomal stalk which helps the ribosome interact with GTP-bound translation factors. This Granulibacter bethesdensis (strain ATCC BAA-1260 / CGDNIH1) protein is Large ribosomal subunit protein uL11.